A 284-amino-acid chain; its full sequence is Tropomyosin alpha-1 chain (284 aa).

N-acetylmethionine is present on Met1. A disordered region spans residues 1-40 (MDAIKKKMQMLKLDKENALDRAEQAESDKKASEDRSKQLE). The stretch at 1–284 (MDAIKKKMQM…DHALNDMTSI (284 aa)) forms a coiled coil. Positions 12–40 (KLDKENALDRAEQAESDKKASEDRSKQLE) are enriched in basic and acidic residues.

Homodimer. Heterodimer of an alpha (TPM1, TPM3 or TPM4) and a beta (TPM2) chain.

Its subcellular location is the cytoplasm. The protein resides in the cytoskeleton. Functionally, binds to actin filaments in muscle and non-muscle cells. Plays a central role, in association with the troponin complex, in the calcium dependent regulation of vertebrate striated muscle contraction. Smooth muscle contraction is regulated by interaction with caldesmon. In non-muscle cells is implicated in stabilizing cytoskeleton actin filaments. The chain is Tropomyosin alpha-1 chain from Chelon auratus (Golden grey mullet).